A 218-amino-acid polypeptide reads, in one-letter code: Deoxyribose-phosphate aldolase (218 aa).

The active-site Proton donor/acceptor is Asp-92. Catalysis depends on Lys-156, which acts as the Schiff-base intermediate with acetaldehyde. Catalysis depends on Lys-185, which acts as the Proton donor/acceptor.

The protein belongs to the DeoC/FbaB aldolase family. DeoC type 1 subfamily.

It localises to the cytoplasm. It carries out the reaction 2-deoxy-D-ribose 5-phosphate = D-glyceraldehyde 3-phosphate + acetaldehyde. Its pathway is carbohydrate degradation; 2-deoxy-D-ribose 1-phosphate degradation; D-glyceraldehyde 3-phosphate and acetaldehyde from 2-deoxy-alpha-D-ribose 1-phosphate: step 2/2. Functionally, catalyzes a reversible aldol reaction between acetaldehyde and D-glyceraldehyde 3-phosphate to generate 2-deoxy-D-ribose 5-phosphate. The chain is Deoxyribose-phosphate aldolase from Desulfitobacterium hafniense (strain DSM 10664 / DCB-2).